The following is a 901-amino-acid chain: Core protein VP3 (901 aa).

The protein belongs to the orbivirus VP3 family.

It localises to the virion. The VP3 protein is one of the five proteins (with VP1, VP4, VP6 and VP7) which form the inner capsid of the virus. The chain is Core protein VP3 (Segment-3) from Bluetongue virus 11 (isolate USA) (BTV 11).